Reading from the N-terminus, the 644-residue chain is DNA mismatch repair protein MutL (644 aa).

The interval 336-356 (KRNINPLNRDDKTKDKSEYQK) is disordered. The span at 343 to 356 (NRDDKTKDKSEYQK) shows a compositional bias: basic and acidic residues.

This sequence belongs to the DNA mismatch repair MutL/HexB family.

In terms of biological role, this protein is involved in the repair of mismatches in DNA. It is required for dam-dependent methyl-directed DNA mismatch repair. May act as a 'molecular matchmaker', a protein that promotes the formation of a stable complex between two or more DNA-binding proteins in an ATP-dependent manner without itself being part of a final effector complex. This chain is DNA mismatch repair protein MutL, found in Halothermothrix orenii (strain H 168 / OCM 544 / DSM 9562).